The chain runs to 119 residues: NADH-quinone oxidoreductase subunit A (119 aa).

The next 3 helical transmembrane spans lie at 9-29 (VLLFILVGIGVGVVPLLLGYV), 63-83 (LVAILFILFDLEIAFLFPWAV), and 88-108 (VGVTGFVAVLVFLAILVVGFA).

It belongs to the complex I subunit 3 family. In terms of assembly, NDH-1 is composed of 14 different subunits. Subunits NuoA, H, J, K, L, M, N constitute the membrane sector of the complex.

It is found in the cell inner membrane. It catalyses the reaction a quinone + NADH + 5 H(+)(in) = a quinol + NAD(+) + 4 H(+)(out). In terms of biological role, NDH-1 shuttles electrons from NADH, via FMN and iron-sulfur (Fe-S) centers, to quinones in the respiratory chain. The immediate electron acceptor for the enzyme in this species is believed to be ubiquinone. Couples the redox reaction to proton translocation (for every two electrons transferred, four hydrogen ions are translocated across the cytoplasmic membrane), and thus conserves the redox energy in a proton gradient. The polypeptide is NADH-quinone oxidoreductase subunit A (Acidovorax sp. (strain JS42)).